The primary structure comprises 78 residues: Defensin-like protein 149 (78 aa).

A signal peptide spans 1 to 25 (MMKKLIQLSFTVMIIFTILVLGVVA). Intrachain disulfides connect Cys-36/Cys-77, Cys-45/Cys-65, Cys-50/Cys-71, and Cys-54/Cys-73.

It belongs to the DEFL family.

The protein localises to the secreted. This chain is Defensin-like protein 149 (LCR5), found in Arabidopsis thaliana (Mouse-ear cress).